A 239-amino-acid polypeptide reads, in one-letter code: 1-(5-phosphoribosyl)-5-[(5-phosphoribosylamino)methylideneamino] imidazole-4-carboxamide isomerase (239 aa).

The active-site Proton acceptor is Asp8. Catalysis depends on Asp129, which acts as the Proton donor.

This sequence belongs to the HisA/HisF family.

It localises to the cytoplasm. The enzyme catalyses 1-(5-phospho-beta-D-ribosyl)-5-[(5-phospho-beta-D-ribosylamino)methylideneamino]imidazole-4-carboxamide = 5-[(5-phospho-1-deoxy-D-ribulos-1-ylimino)methylamino]-1-(5-phospho-beta-D-ribosyl)imidazole-4-carboxamide. It functions in the pathway amino-acid biosynthesis; L-histidine biosynthesis; L-histidine from 5-phospho-alpha-D-ribose 1-diphosphate: step 4/9. This chain is 1-(5-phosphoribosyl)-5-[(5-phosphoribosylamino)methylideneamino] imidazole-4-carboxamide isomerase, found in Bacillus anthracis (strain A0248).